The sequence spans 98 residues: Large ribosomal subunit protein uL23 (98 aa).

Belongs to the universal ribosomal protein uL23 family. As to quaternary structure, part of the 50S ribosomal subunit. Contacts protein L29, and trigger factor when it is bound to the ribosome.

One of the early assembly proteins it binds 23S rRNA. One of the proteins that surrounds the polypeptide exit tunnel on the outside of the ribosome. Forms the main docking site for trigger factor binding to the ribosome. This is Large ribosomal subunit protein uL23 from Ruegeria pomeroyi (strain ATCC 700808 / DSM 15171 / DSS-3) (Silicibacter pomeroyi).